We begin with the raw amino-acid sequence, 208 residues long: NAD(P)H-quinone oxidoreductase subunit I (208 aa).

4Fe-4S ferredoxin-type domains are found at residues 55–84 (GRIHYEFDKCIACEVCVRVCPINLPVVDWV) and 95–124 (RNYSIDFGVCIFCGNCVEYCPTNCLSMTEE). [4Fe-4S] cluster is bound by residues Cys64, Cys67, Cys70, Cys74, Cys104, Cys107, Cys110, and Cys114.

Belongs to the complex I 23 kDa subunit family. NDH-1 is composed of at least 11 different subunits. [4Fe-4S] cluster serves as cofactor.

It is found in the cellular thylakoid membrane. The catalysed reaction is a plastoquinone + NADH + (n+1) H(+)(in) = a plastoquinol + NAD(+) + n H(+)(out). It carries out the reaction a plastoquinone + NADPH + (n+1) H(+)(in) = a plastoquinol + NADP(+) + n H(+)(out). Functionally, NDH-1 shuttles electrons from an unknown electron donor, via FMN and iron-sulfur (Fe-S) centers, to quinones in the respiratory and/or the photosynthetic chain. The immediate electron acceptor for the enzyme in this species is believed to be plastoquinone. Couples the redox reaction to proton translocation, and thus conserves the redox energy in a proton gradient. The sequence is that of NAD(P)H-quinone oxidoreductase subunit I from Prochlorococcus marinus subsp. pastoris (strain CCMP1986 / NIES-2087 / MED4).